Consider the following 217-residue polypeptide: Uracil-DNA glycosylase (217 aa).

The active-site Proton acceptor is the aspartate 62.

The protein belongs to the uracil-DNA glycosylase (UDG) superfamily. UNG family.

The protein resides in the cytoplasm. It catalyses the reaction Hydrolyzes single-stranded DNA or mismatched double-stranded DNA and polynucleotides, releasing free uracil.. Its function is as follows. Excises uracil residues from the DNA which can arise as a result of misincorporation of dUMP residues by DNA polymerase or due to deamination of cytosine. In Streptococcus pyogenes serotype M3 (strain ATCC BAA-595 / MGAS315), this protein is Uracil-DNA glycosylase.